Consider the following 90-residue polypeptide: DNA-binding protein HU-alpha (90 aa).

The protein belongs to the bacterial histone-like protein family. Heterodimer of an alpha and a beta chain.

Its function is as follows. Histone-like DNA-binding protein which is capable of wrapping DNA to stabilize it, and thus to prevent its denaturation under extreme environmental conditions. This Salmonella typhi protein is DNA-binding protein HU-alpha (hupA).